The following is a 309-amino-acid chain: Sodium/potassium-transporting ATPase subunit beta-1 (309 aa).

At 1–45 the chain is on the cytoplasmic side; sequence MSKNNGKGAKGEFEFPQPAKKQTFSEMIYNPQEGTFFGRTGKSWS. The chain crosses the membrane as a helical; Signal-anchor for type II membrane protein span at residues 46-66; sequence QLLLFYTIFYIVLAALFTICM. At 67–309 the chain is on the extracellular side; sequence QGLLSTISDT…GSVTFQILLD (243 aa). A glycan (N-linked (GlcNAc...) asparagine) is linked at N133. Intrachain disulfides connect C143/C155 and C165/C179. N211 carries an N-linked (GlcNAc...) asparagine glycan. C225 and C282 are oxidised to a cystine.

Belongs to the X(+)/potassium ATPases subunit beta family. In terms of assembly, the sodium/potassium-transporting ATPase is composed of a catalytic alpha subunit, an auxiliary non-catalytic beta subunit and an additional regulatory subunit. Interacts with nkain. In embryos, it is expressed in the neurons of the CNS and PNS, in Garland cells and posterior spiracles. In adults, it is concentrated in the thorax and abdomen (muscle tissue, digestive system and Malpighian tubules) and weakly expressed in the head. Expression is diffuse in the nervous system.

The protein localises to the cell membrane. Functionally, this is the non-catalytic component of the active enzyme, which catalyzes the hydrolysis of ATP coupled with the exchange of Na(+) and K(+) ions across the plasma membrane. The beta subunit regulates, through assembly of alpha/beta heterodimers, the number of sodium pumps transported to the plasma membrane. The polypeptide is Sodium/potassium-transporting ATPase subunit beta-1 (nrv1) (Drosophila melanogaster (Fruit fly)).